We begin with the raw amino-acid sequence, 83 residues long: Phytosulfokines 4 (83 aa).

An N-terminal signal peptide occupies residues 1 to 28; that stretch reads MAARTVAVAAALAVLLIFAASSATVAMA. The propeptide occupies 29–74; the sequence is GRPTPTTSLDEEAAQAAAQSEIGGGCKEGEGEEECLARRTLTAHTD. Y75 and Y77 each carry sulfotyrosine. A propeptide spanning residues 80-83 is cleaved from the precursor; the sequence is QHHN.

This sequence belongs to the phytosulfokine family. Post-translationally, sulfation is important for activity and for the binding to a putative membrane receptor. PSK-alpha is produced by endopeptidase digestion. PSK-beta is produced from PSK-alpha by exopeptidase digestion.

The protein localises to the secreted. Promotes plant cell differentiation, organogenesis and somatic embryogenesis as well as cell proliferation. The protein is Phytosulfokines 4 (PSK4) of Oryza sativa subsp. japonica (Rice).